We begin with the raw amino-acid sequence, 147 residues long: Large ribosomal subunit protein bL9 (147 aa).

This sequence belongs to the bacterial ribosomal protein bL9 family.

Binds to the 23S rRNA. This chain is Large ribosomal subunit protein bL9, found in Helicobacter hepaticus (strain ATCC 51449 / 3B1).